Consider the following 603-residue polypeptide: UvrABC system protein C (603 aa).

The 78-residue stretch at 15-92 (DQPGCYLMKD…IKKHDPRFNI (78 aa)) folds into the GIY-YIG domain. The region spanning 197–232 (KTVKNDLMKKMQEAAENMEFEKAGEFRDQINAIETT) is the UVR domain.

It belongs to the UvrC family. As to quaternary structure, interacts with UvrB in an incision complex.

It is found in the cytoplasm. Its function is as follows. The UvrABC repair system catalyzes the recognition and processing of DNA lesions. UvrC both incises the 5' and 3' sides of the lesion. The N-terminal half is responsible for the 3' incision and the C-terminal half is responsible for the 5' incision. In Listeria monocytogenes serotype 4b (strain CLIP80459), this protein is UvrABC system protein C.